The sequence spans 366 residues: UDP-N-acetylglucosamine--N-acetylmuramyl-(pentapeptide) pyrophosphoryl-undecaprenol N-acetylglucosamine transferase (366 aa).

UDP-N-acetyl-alpha-D-glucosamine contacts are provided by residues 10 to 12 (TGG), asparagine 124, arginine 166, serine 196, and glutamine 296.

The protein belongs to the glycosyltransferase 28 family. MurG subfamily.

The protein localises to the cell membrane. The catalysed reaction is di-trans,octa-cis-undecaprenyl diphospho-N-acetyl-alpha-D-muramoyl-L-alanyl-D-glutamyl-meso-2,6-diaminopimeloyl-D-alanyl-D-alanine + UDP-N-acetyl-alpha-D-glucosamine = di-trans,octa-cis-undecaprenyl diphospho-[N-acetyl-alpha-D-glucosaminyl-(1-&gt;4)]-N-acetyl-alpha-D-muramoyl-L-alanyl-D-glutamyl-meso-2,6-diaminopimeloyl-D-alanyl-D-alanine + UDP + H(+). The protein operates within cell wall biogenesis; peptidoglycan biosynthesis. Cell wall formation. Catalyzes the transfer of a GlcNAc subunit on undecaprenyl-pyrophosphoryl-MurNAc-pentapeptide (lipid intermediate I) to form undecaprenyl-pyrophosphoryl-MurNAc-(pentapeptide)GlcNAc (lipid intermediate II). In Alkaliphilus oremlandii (strain OhILAs) (Clostridium oremlandii (strain OhILAs)), this protein is UDP-N-acetylglucosamine--N-acetylmuramyl-(pentapeptide) pyrophosphoryl-undecaprenol N-acetylglucosamine transferase.